Here is a 669-residue protein sequence, read N- to C-terminus: Armadillo repeat-containing protein gudu (669 aa).

Residues 1–10 (MIGTSSGTSH) show a composition bias toward polar residues. The interval 1–53 (MIGTSSGTSHNRSRKKKEQCGSCPNRFSKDKRQVAAEDSDTTEVESSTDEEER) is disordered. Residues 37–51 (EDSDTTEVESSTDEE) show a composition bias toward acidic residues. 10 ARM repeats span residues 100–139 (QINQ…DITL), 141–180 (IDIR…NVCK), 240–279 (KHNM…KCSS), 281–320 (PKFQ…KCAF), 322–365 (GTTR…MCAV), 367–406 (DANV…ECVR), 408–447 (QSNR…ECAE), 492–531 (DSAE…TIAQ), 574–613 (GNNT…KLSM), and 615–654 (PQNC…NIRE).

As to expression, highly expressed in testis.

In terms of biological role, important for spermatogenesis where it may have a role in sperm individualization. The sequence is that of Armadillo repeat-containing protein gudu from Drosophila melanogaster (Fruit fly).